Here is a 313-residue protein sequence, read N- to C-terminus: tRNA-cytidine(32) 2-sulfurtransferase (313 aa).

The PP-loop motif motif lies at 50 to 55 (SGGKDS). Cys-125, Cys-128, and Cys-216 together coordinate [4Fe-4S] cluster.

This sequence belongs to the TtcA family. In terms of assembly, homodimer. It depends on Mg(2+) as a cofactor. [4Fe-4S] cluster is required as a cofactor.

The protein localises to the cytoplasm. It catalyses the reaction cytidine(32) in tRNA + S-sulfanyl-L-cysteinyl-[cysteine desulfurase] + AH2 + ATP = 2-thiocytidine(32) in tRNA + L-cysteinyl-[cysteine desulfurase] + A + AMP + diphosphate + H(+). It functions in the pathway tRNA modification. Catalyzes the ATP-dependent 2-thiolation of cytidine in position 32 of tRNA, to form 2-thiocytidine (s(2)C32). The sulfur atoms are provided by the cysteine/cysteine desulfurase (IscS) system. The chain is tRNA-cytidine(32) 2-sulfurtransferase from Haemophilus influenzae (strain ATCC 51907 / DSM 11121 / KW20 / Rd).